Consider the following 282-residue polypeptide: Ribosomal RNA small subunit methyltransferase A (282 aa).

S-adenosyl-L-methionine contacts are provided by Asn-28, Leu-30, Gly-55, Glu-77, Asp-103, and Asn-123.

Belongs to the class I-like SAM-binding methyltransferase superfamily. rRNA adenine N(6)-methyltransferase family. RsmA subfamily.

The protein resides in the cytoplasm. It carries out the reaction adenosine(1518)/adenosine(1519) in 16S rRNA + 4 S-adenosyl-L-methionine = N(6)-dimethyladenosine(1518)/N(6)-dimethyladenosine(1519) in 16S rRNA + 4 S-adenosyl-L-homocysteine + 4 H(+). In terms of biological role, specifically dimethylates two adjacent adenosines (A1518 and A1519) in the loop of a conserved hairpin near the 3'-end of 16S rRNA in the 30S particle. May play a critical role in biogenesis of 30S subunits. In Afipia carboxidovorans (strain ATCC 49405 / DSM 1227 / KCTC 32145 / OM5) (Oligotropha carboxidovorans), this protein is Ribosomal RNA small subunit methyltransferase A.